Reading from the N-terminus, the 87-residue chain is Large ribosomal subunit protein bL27 (87 aa).

A disordered region spans residues 1–21 (MAHKKAGGSSRNGRDSESKRL).

The protein belongs to the bacterial ribosomal protein bL27 family.

This is Large ribosomal subunit protein bL27 from Paraburkholderia phytofirmans (strain DSM 17436 / LMG 22146 / PsJN) (Burkholderia phytofirmans).